The sequence spans 494 residues: Alpha-amylase 2 (494 aa).

Positions 1-18 (MFLAKSIVCLALLAVANA) are cleaved as a signal peptide. Cys-46 and Cys-102 form a disulfide bridge. Ca(2+)-binding residues include Asn-116, Arg-165, and Asp-174. The cysteines at positions 153 and 167 are disulfide-linked. A chloride-binding site is contributed by Arg-202. The active-site Nucleophile is the Asp-204. A Ca(2+)-binding site is contributed by His-208. Glu-241 acts as the Proton donor in catalysis. Chloride is bound by residues Asn-304 and Arg-343. Residues 350-370 (FTDTDQGPPTTDGQNIASPSF) are disordered. Residues 351 to 363 (TDTDQGPPTTDGQ) show a composition bias toward low complexity. 2 disulfide bridges follow: Cys-376–Cys-382 and Cys-448–Cys-460.

The protein belongs to the glycosyl hydrolase 13 family. In terms of assembly, monomer. Requires Ca(2+) as cofactor. It depends on chloride as a cofactor.

The catalysed reaction is Endohydrolysis of (1-&gt;4)-alpha-D-glucosidic linkages in polysaccharides containing three or more (1-&gt;4)-alpha-linked D-glucose units.. The chain is Alpha-amylase 2 (Amy58) from Drosophila ananassae (Fruit fly).